The sequence spans 222 residues: UPF0758 protein YicR (222 aa).

Residues 100–222 enclose the MPN domain; it reads PLLSPEMTRE…NVSFAERGWI (123 aa). Residues H171, H173, and D184 each contribute to the Zn(2+) site. The JAMM motif motif lies at 171–184; sequence HNHPSGCAEPSKAD.

This sequence belongs to the UPF0758 family. YicR subfamily.

This chain is UPF0758 protein YicR, found in Shigella boydii serotype 18 (strain CDC 3083-94 / BS512).